Here is a 339-residue protein sequence, read N- to C-terminus: Probable thylakoid lumen protein sll0997 (339 aa).

Positions 1–26 (MAPYQSFHIGLLGLALASVWPLSACA) are cleaved as a signal peptide.

It localises to the cellular thylakoid lumen. This Synechocystis sp. (strain ATCC 27184 / PCC 6803 / Kazusa) protein is Probable thylakoid lumen protein sll0997.